The chain runs to 193 residues: Ribonuclease HII (193 aa).

The 179-residue stretch at 15-193 folds into the RNase H type-2 domain; sequence CIVAGIDEAG…PYHRRSFRCC (179 aa). Residues Asp-21, Glu-22, and Asp-112 each contribute to the a divalent metal cation site.

This sequence belongs to the RNase HII family. The cofactor is Mn(2+). Requires Mg(2+) as cofactor.

It is found in the cytoplasm. It carries out the reaction Endonucleolytic cleavage to 5'-phosphomonoester.. Endonuclease that specifically degrades the RNA of RNA-DNA hybrids. The protein is Ribonuclease HII of Rickettsia africae (strain ESF-5).